Here is a 302-residue protein sequence, read N- to C-terminus: Sulfate adenylyltransferase subunit 2 (302 aa).

The protein belongs to the PAPS reductase family. CysD subfamily. As to quaternary structure, heterodimer composed of CysD, the smaller subunit, and CysN.

The enzyme catalyses sulfate + ATP + H(+) = adenosine 5'-phosphosulfate + diphosphate. It functions in the pathway sulfur metabolism; hydrogen sulfide biosynthesis; sulfite from sulfate: step 1/3. With CysN forms the ATP sulfurylase (ATPS) that catalyzes the adenylation of sulfate producing adenosine 5'-phosphosulfate (APS) and diphosphate, the first enzymatic step in sulfur assimilation pathway. APS synthesis involves the formation of a high-energy phosphoric-sulfuric acid anhydride bond driven by GTP hydrolysis by CysN coupled to ATP hydrolysis by CysD. This is Sulfate adenylyltransferase subunit 2 from Shewanella pealeana (strain ATCC 700345 / ANG-SQ1).